Reading from the N-terminus, the 432-residue chain is UDP-N-acetylglucosamine 1-carboxyvinyltransferase (432 aa).

22 to 23 (KN) provides a ligand contact to phosphoenolpyruvate. R102 lines the UDP-N-acetyl-alpha-D-glucosamine pocket. C126 serves as the catalytic Proton donor. The residue at position 126 (C126) is a 2-(S-cysteinyl)pyruvic acid O-phosphothioketal. UDP-N-acetyl-alpha-D-glucosamine contacts are provided by residues 131 to 135 (RPVDL), D317, and I339.

It belongs to the EPSP synthase family. MurA subfamily.

It localises to the cytoplasm. It carries out the reaction phosphoenolpyruvate + UDP-N-acetyl-alpha-D-glucosamine = UDP-N-acetyl-3-O-(1-carboxyvinyl)-alpha-D-glucosamine + phosphate. The protein operates within cell wall biogenesis; peptidoglycan biosynthesis. In terms of biological role, cell wall formation. Adds enolpyruvyl to UDP-N-acetylglucosamine. The polypeptide is UDP-N-acetylglucosamine 1-carboxyvinyltransferase (Rhodospirillum centenum (strain ATCC 51521 / SW)).